We begin with the raw amino-acid sequence, 168 residues long: Phospholipase A and acyltransferase 1 (168 aa).

The Cytoplasmic segment spans residues 1 to 138; that stretch reads MAFNDCFSLN…GEGVSEQANR (138 aa). An LRAT domain is found at 20-135; the sequence is LIEVFRPGYQ…LRYGEGVSEQ (116 aa). His-30 is an active-site residue. Cys-119 serves as the catalytic Acyl-thioester intermediate. Residues 139–159 form a helical membrane-spanning segment; that stretch reads AISTVEFVTAAVGVFSFLGLF. Topologically, residues 160–168 are lumenal; it reads PKGQRAKYY.

Belongs to the H-rev107 family. As to expression, abundantly expressed in testis, skeletal muscle, brain, and heart. In terms of tissue distribution, highly expressed in the testis, skeletal muscle, brain, heart, and thyroid.

The protein resides in the membrane. The protein localises to the cytoplasm. Its subcellular location is the nucleus. It carries out the reaction a 1,2-diacyl-sn-glycero-3-phosphocholine + H2O = a 1-acyl-sn-glycero-3-phosphocholine + a fatty acid + H(+). The catalysed reaction is a 1,2-diacyl-sn-glycero-3-phosphocholine + H2O = a 2-acyl-sn-glycero-3-phosphocholine + a fatty acid + H(+). The enzyme catalyses 1,2-dihexadecanoyl-sn-glycero-3-phosphocholine + H2O = 2-hexadecanoyl-sn-glycero-3-phosphocholine + hexadecanoate + H(+). It catalyses the reaction 1,2-dihexadecanoyl-sn-glycero-3-phosphocholine + H2O = 1-hexadecanoyl-sn-glycero-3-phosphocholine + hexadecanoate + H(+). It carries out the reaction 1-hexadecanoyl-2-(5Z,8Z,11Z,14Z-eicosatetraenoyl)-sn-glycero-3-phosphoethanolamine + H2O = 2-(5Z,8Z,11Z,14Z)-eicosatetraenoyl-sn-glycero-3-phosphoethanolamine + hexadecanoate + H(+). The catalysed reaction is 1-hexadecanoyl-2-(5Z,8Z,11Z,14Z-eicosatetraenoyl)-sn-glycero-3-phosphoethanolamine + H2O = 1-hexadecanoyl-sn-glycero-3-phosphoethanolamine + (5Z,8Z,11Z,14Z)-eicosatetraenoate + H(+). The enzyme catalyses 1,2-di-(9Z-octadecenoyl)-sn-glycero-3-phosphoethanolamine + 1,2-dihexadecanoyl-sn-glycero-3-phosphocholine = hexadecanoyl-sn-glycero-3-phosphocholine + N-hexadecanoyl-1,2-di-(9Z-octadecenoyl)-sn-glycero-3-phosphoethanolamine + H(+). It catalyses the reaction 1,2-dihexadecanoyl-sn-glycero-3-phosphocholine + a 2-acyl-sn-glycero-3-phosphocholine = a 1-hexadecanoyl-2-acyl-sn-glycero-3-phosphocholine + 2-hexadecanoyl-sn-glycero-3-phosphocholine. Functionally, exhibits both phospholipase A1/2 and acyltransferase activities. Shows phospholipase A1 (PLA1) and A2 (PLA2) activity, catalyzing the calcium-independent release of fatty acids from the sn-1 or sn-2 position of glycerophospholipids. Shows O-acyltransferase activity, catalyzing the transfer of a fatty acyl group from glycerophospholipid to the hydroxyl group of lysophospholipid. Shows N-acyltransferase activity, catalyzing the calcium-independent transfer of a fatty acyl group at the sn-1 position of phosphatidylcholine (PC) and other glycerophospholipids to the primary amine of phosphatidylethanolamine (PE), forming N-acylphosphatidylethanolamine (NAPE) which serves as precursor for N-acylethanolamines (NAEs). This is Phospholipase A and acyltransferase 1 from Homo sapiens (Human).